The primary structure comprises 369 residues: Peptide chain release factor 2 (369 aa).

Gln251 bears the N5-methylglutamine mark.

Belongs to the prokaryotic/mitochondrial release factor family. Post-translationally, methylated by PrmC. Methylation increases the termination efficiency of RF2.

The protein localises to the cytoplasm. Peptide chain release factor 2 directs the termination of translation in response to the peptide chain termination codons UGA and UAA. The chain is Peptide chain release factor 2 (prfB) from Chlamydia pneumoniae (Chlamydophila pneumoniae).